Here is a 511-residue protein sequence, read N- to C-terminus: 2-isopropylmalate synthase (511 aa).

Residues 5-267 form the Pyruvate carboxyltransferase domain; it reads IQIFDTTLRD…ESQINLEETK (263 aa). Residues aspartate 14, histidine 202, histidine 204, and asparagine 238 each coordinate Mn(2+). The regulatory domain stretch occupies residues 391–511; sequence QLDNLQLQYV…EYELKEGIRT (121 aa).

This sequence belongs to the alpha-IPM synthase/homocitrate synthase family. LeuA type 1 subfamily. As to quaternary structure, homodimer. The cofactor is Mn(2+).

The protein localises to the cytoplasm. It carries out the reaction 3-methyl-2-oxobutanoate + acetyl-CoA + H2O = (2S)-2-isopropylmalate + CoA + H(+). Its pathway is amino-acid biosynthesis; L-leucine biosynthesis; L-leucine from 3-methyl-2-oxobutanoate: step 1/4. Catalyzes the condensation of the acetyl group of acetyl-CoA with 3-methyl-2-oxobutanoate (2-ketoisovalerate) to form 3-carboxy-3-hydroxy-4-methylpentanoate (2-isopropylmalate). This chain is 2-isopropylmalate synthase, found in Staphylococcus epidermidis (strain ATCC 35984 / DSM 28319 / BCRC 17069 / CCUG 31568 / BM 3577 / RP62A).